The sequence spans 685 residues: DNA ligase (685 aa).

NAD(+) contacts are provided by residues 48 to 52, 97 to 98, and E131; these read DAEYD and SL. K133 serves as the catalytic N6-AMP-lysine intermediate. NAD(+)-binding residues include R154, E190, K304, and K328. 4 residues coordinate Zn(2+): C422, C425, C440, and C445. Residues 603-685 enclose the BRCT domain; it reads PEEGPLSGRR…RLLSGEERPG (83 aa).

It belongs to the NAD-dependent DNA ligase family. LigA subfamily. Requires Mg(2+) as cofactor. Mn(2+) is required as a cofactor.

The enzyme catalyses NAD(+) + (deoxyribonucleotide)n-3'-hydroxyl + 5'-phospho-(deoxyribonucleotide)m = (deoxyribonucleotide)n+m + AMP + beta-nicotinamide D-nucleotide.. DNA ligase that catalyzes the formation of phosphodiester linkages between 5'-phosphoryl and 3'-hydroxyl groups in double-stranded DNA using NAD as a coenzyme and as the energy source for the reaction. It is essential for DNA replication and repair of damaged DNA. The sequence is that of DNA ligase from Rubrobacter xylanophilus (strain DSM 9941 / JCM 11954 / NBRC 16129 / PRD-1).